A 911-amino-acid chain; its full sequence is Eukaryotic translation initiation factor 3 subunit C (911 aa).

Disordered stretches follow at residues 1 to 38 (MSRF…DDEE) and 155 to 181 (SRFR…GEAA). Residues 11 to 20 (SESESSEEEV) are compositionally biased toward acidic residues. The span at 23–32 (PNFNKASAFQ) shows a compositional bias: polar residues. Ser34, Ser165, Ser175, and Ser184 each carry phosphoserine. A compositionally biased stretch (acidic residues) spans 162–171 (DQESEAEDEE). Positions 196–208 (APKIAKSAPAKSV) are enriched in low complexity. A disordered region spans residues 196–284 (APKIAKSAPA…KRAEDDEDGE (89 aa)). The segment covering 210–236 (ADDEDSDDSIDWDSDSESETESSEDEN) has biased composition (acidic residues). Basic and acidic residues predominate over residues 241-271 (MRERFLKRSTEKGEDKGDDDKRKDKRKEQKL). One can recognise a PCI domain in the interval 642–818 (FHMHINLELL…ETVVMHRSEP (177 aa)). The segment at 851-911 (FQRGNMGNRG…QQQVQTIDEE (61 aa)) is disordered. Over residues 885-896 (QRNRNQRGHHKN) the composition is skewed to basic residues. The span at 897–911 (QQQQQQQQVQTIDEE) shows a compositional bias: low complexity.

Belongs to the eIF-3 subunit C family. Component of the eukaryotic translation initiation factor 3 (eIF-3) complex. The eIF-3 complex interacts with pix.

It localises to the cytoplasm. In terms of biological role, component of the eukaryotic translation initiation factor 3 (eIF-3) complex, which is involved in protein synthesis of a specialized repertoire of mRNAs and, together with other initiation factors, stimulates binding of mRNA and methionyl-tRNAi to the 40S ribosome. The eIF-3 complex specifically targets and initiates translation of a subset of mRNAs involved in cell proliferation. This chain is Eukaryotic translation initiation factor 3 subunit C, found in Drosophila pseudoobscura pseudoobscura (Fruit fly).